The chain runs to 206 residues: Holliday junction branch migration complex subunit RuvA (206 aa).

Residues 1–64 form a domain I region; sequence MIAKLTGLLD…EDNIQLFGFA (64 aa). Residues 65–143 are domain II; that stretch reads DTEERDWFRL…SFGAPAPAAA (79 aa). The flexible linker stretch occupies residues 144–154; that stretch reads TAGKGGAAPAG. The interval 154-206 is domain III; sequence GPAGAVADAVSALVNLGYRRVEAFTAVNAVAQRLGPEAGVSDLIRAGLKELSP.

The protein belongs to the RuvA family. In terms of assembly, homotetramer. Forms an RuvA(8)-RuvB(12)-Holliday junction (HJ) complex. HJ DNA is sandwiched between 2 RuvA tetramers; dsDNA enters through RuvA and exits via RuvB. An RuvB hexamer assembles on each DNA strand where it exits the tetramer. Each RuvB hexamer is contacted by two RuvA subunits (via domain III) on 2 adjacent RuvB subunits; this complex drives branch migration. In the full resolvosome a probable DNA-RuvA(4)-RuvB(12)-RuvC(2) complex forms which resolves the HJ.

It is found in the cytoplasm. The RuvA-RuvB-RuvC complex processes Holliday junction (HJ) DNA during genetic recombination and DNA repair, while the RuvA-RuvB complex plays an important role in the rescue of blocked DNA replication forks via replication fork reversal (RFR). RuvA specifically binds to HJ cruciform DNA, conferring on it an open structure. The RuvB hexamer acts as an ATP-dependent pump, pulling dsDNA into and through the RuvAB complex. HJ branch migration allows RuvC to scan DNA until it finds its consensus sequence, where it cleaves and resolves the cruciform DNA. In Rhodospirillum centenum (strain ATCC 51521 / SW), this protein is Holliday junction branch migration complex subunit RuvA.